Consider the following 110-residue polypeptide: Minor capsid protein VP2 (110 aa).

The protein belongs to the vesivirus VP2 protein family. In terms of assembly, homooligomer. The portal-like structure consists in 12 copies of VP2. Interacts with capsid protein VP1.

The protein resides in the virion. The protein localises to the host cytoplasm. Its function is as follows. Minor structural protein that forms a portal-like structure at a unique three-fold axis of symmetry, following binding to the host receptor. The channel formed by VP2 may allow the delivery of the viral genome through the host endosomal membrane. This is Minor capsid protein VP2 from Otariidae (fur seals &amp; sea lions).